The following is an 87-amino-acid chain: Small ribosomal subunit protein uS19 (87 aa).

It belongs to the universal ribosomal protein uS19 family.

Its function is as follows. Protein S19 forms a complex with S13 that binds strongly to the 16S ribosomal RNA. The polypeptide is Small ribosomal subunit protein uS19 (rpsS) (Mycoplasma genitalium (strain ATCC 33530 / DSM 19775 / NCTC 10195 / G37) (Mycoplasmoides genitalium)).